The chain runs to 279 residues: Urease accessory protein UreD (279 aa).

The protein belongs to the UreD family. UreD, UreF and UreG form a complex that acts as a GTP-hydrolysis-dependent molecular chaperone, activating the urease apoprotein by helping to assemble the nickel containing metallocenter of UreC. The UreE protein probably delivers the nickel.

It localises to the cytoplasm. Required for maturation of urease via the functional incorporation of the urease nickel metallocenter. This chain is Urease accessory protein UreD, found in Pseudomonas fluorescens (strain Pf0-1).